We begin with the raw amino-acid sequence, 208 residues long: Small ribosomal subunit protein uS2 (208 aa).

It belongs to the universal ribosomal protein uS2 family.

This Cenarchaeum symbiosum (strain A) protein is Small ribosomal subunit protein uS2.